A 211-amino-acid polypeptide reads, in one-letter code: Uridine kinase (211 aa).

12–19 (GGSGSGKT) is a binding site for ATP.

Belongs to the uridine kinase family.

Its subcellular location is the cytoplasm. It catalyses the reaction uridine + ATP = UMP + ADP + H(+). The catalysed reaction is cytidine + ATP = CMP + ADP + H(+). It functions in the pathway pyrimidine metabolism; CTP biosynthesis via salvage pathway; CTP from cytidine: step 1/3. The protein operates within pyrimidine metabolism; UMP biosynthesis via salvage pathway; UMP from uridine: step 1/1. This chain is Uridine kinase, found in Bacillus licheniformis (strain ATCC 14580 / DSM 13 / JCM 2505 / CCUG 7422 / NBRC 12200 / NCIMB 9375 / NCTC 10341 / NRRL NRS-1264 / Gibson 46).